A 102-amino-acid chain; its full sequence is Citrate lyase acyl carrier protein (102 aa).

Position 14 is an O-(phosphoribosyl dephospho-coenzyme A)serine (Ser14).

It belongs to the CitD family. As to quaternary structure, oligomer with a subunit composition of (alpha,beta,gamma)6.

The protein resides in the cytoplasm. Its function is as follows. Covalent carrier of the coenzyme of citrate lyase. The protein is Citrate lyase acyl carrier protein of Streptococcus mutans serotype c (strain ATCC 700610 / UA159).